We begin with the raw amino-acid sequence, 343 residues long: Glyceraldehyde-3-phosphate dehydrogenase (343 aa).

Residues 13-14 and glycine 112 each bind NAD(+); that span reads TI. Residue 141-143 coordinates D-glyceraldehyde 3-phosphate; that stretch reads SCN. The active-site Nucleophile is cysteine 142. Position 170 (arginine 170) interacts with NAD(+). 196–197 lines the D-glyceraldehyde 3-phosphate pocket; it reads HA. Residue glutamine 303 coordinates NAD(+).

Belongs to the glyceraldehyde-3-phosphate dehydrogenase family. In terms of assembly, homotetramer.

The protein localises to the cytoplasm. The catalysed reaction is D-glyceraldehyde 3-phosphate + phosphate + NADP(+) = (2R)-3-phospho-glyceroyl phosphate + NADPH + H(+). It carries out the reaction D-glyceraldehyde 3-phosphate + phosphate + NAD(+) = (2R)-3-phospho-glyceroyl phosphate + NADH + H(+). Its pathway is carbohydrate degradation; glycolysis; pyruvate from D-glyceraldehyde 3-phosphate: step 1/5. The chain is Glyceraldehyde-3-phosphate dehydrogenase (gap) from Aeropyrum pernix (strain ATCC 700893 / DSM 11879 / JCM 9820 / NBRC 100138 / K1).